Reading from the N-terminus, the 316-residue chain is Homoserine kinase (316 aa).

97-107 contributes to the ATP binding site; that stretch reads PPARGLGSSAS.

Belongs to the GHMP kinase family. Homoserine kinase subfamily.

Its subcellular location is the cytoplasm. The catalysed reaction is L-homoserine + ATP = O-phospho-L-homoserine + ADP + H(+). Its pathway is amino-acid biosynthesis; L-threonine biosynthesis; L-threonine from L-aspartate: step 4/5. Its function is as follows. Catalyzes the ATP-dependent phosphorylation of L-homoserine to L-homoserine phosphate. In Prochlorococcus marinus (strain MIT 9313), this protein is Homoserine kinase.